A 238-amino-acid chain; its full sequence is Pyridoxine 5'-phosphate synthase (238 aa).

Residues asparagine 7 and arginine 18 each contribute to the 3-amino-2-oxopropyl phosphate site. The active-site Proton acceptor is the histidine 43. 1-deoxy-D-xylulose 5-phosphate contacts are provided by arginine 45 and histidine 50. Catalysis depends on glutamate 70, which acts as the Proton acceptor. Threonine 100 provides a ligand contact to 1-deoxy-D-xylulose 5-phosphate. Residue histidine 190 is the Proton donor of the active site. Residues aspartate 191 and 213-214 (GH) contribute to the 3-amino-2-oxopropyl phosphate site.

This sequence belongs to the PNP synthase family. As to quaternary structure, homooctamer; tetramer of dimers.

The protein resides in the cytoplasm. It carries out the reaction 3-amino-2-oxopropyl phosphate + 1-deoxy-D-xylulose 5-phosphate = pyridoxine 5'-phosphate + phosphate + 2 H2O + H(+). It participates in cofactor biosynthesis; pyridoxine 5'-phosphate biosynthesis; pyridoxine 5'-phosphate from D-erythrose 4-phosphate: step 5/5. In terms of biological role, catalyzes the complicated ring closure reaction between the two acyclic compounds 1-deoxy-D-xylulose-5-phosphate (DXP) and 3-amino-2-oxopropyl phosphate (1-amino-acetone-3-phosphate or AAP) to form pyridoxine 5'-phosphate (PNP) and inorganic phosphate. In Porphyromonas gingivalis (strain ATCC 33277 / DSM 20709 / CIP 103683 / JCM 12257 / NCTC 11834 / 2561), this protein is Pyridoxine 5'-phosphate synthase.